The sequence spans 176 residues: Cathelicidin-2 (176 aa).

An N-terminal signal peptide occupies residues 1-29; sequence METQGASLSLGRWSLWLLLLGLVLPSASA. The residue at position 30 (Gln30) is a Pyrrolidone carboxylic acid. A propeptide spanning residues 30-130 is cleaved from the precursor; the sequence is QALSYREAVL…DINCNELQSV (101 aa). Cystine bridges form between Cys85-Cys96 and Cys107-Cys124. The tract at residues 135–176 is disordered; it reads PIRRPPIRPPFRPPFRPPVRPPIRPPFRPPFRPPIGPFPGRR. Pro residues predominate over residues 141 to 176; it reads IRPPFRPPFRPPVRPPIRPPFRPPFRPPIGPFPGRR. Position 173 is a proline amide (Pro173). The propeptide at 174-176 is removed in mature form; it reads GRR.

The protein belongs to the cathelicidin family. Post-translationally, elastase is responsible for its maturation.

The protein localises to the secreted. Binds to the lipid A moiety of bacterial lipipolysaccharides (LPS), a glycolipid present in the outer membrane of all Gram-negative bacteria. Potent antimicrobial activity. In Ovis aries (Sheep), this protein is Cathelicidin-2 (CATHL2).